The sequence spans 354 residues: Protein Wnt-11 (354 aa).

A signal peptide spans 1 to 23 (MTEYRNFLLLFITSLSVIYPCTG). Residues N32, N39, and N89 are each glycosylated (N-linked (GlcNAc...) asparagine). Cystine bridges form between C129–C137, C139–C156, C209–C223, C211–C218, C283–C314, C299–C309, C329–C344, C331–C341, and C336–C337. The O-palmitoleoyl serine; by PORCN moiety is linked to residue S215. An N-linked (GlcNAc...) asparagine glycan is attached at N300.

This sequence belongs to the Wnt family. Post-translationally, palmitoleoylation is required for efficient binding to frizzled receptors. Depalmitoleoylation leads to Wnt signaling pathway inhibition.

It is found in the secreted. Its subcellular location is the extracellular space. The protein localises to the extracellular matrix. In terms of biological role, ligand for fzd5, a member of the G-protein coupled frizzled receptor family. Plays a role in early eye development, possibly through wnt non-canonical signaling. Promotes eye formation, at least partially, by antagonizing the Wnt/beta-catenin pathway. In addition, promotes coherence of eye field cells, potentially contributing to the coordinated morphogenetic behaviors of cells in the nascent eye field. This chain is Protein Wnt-11 (wnt11), found in Danio rerio (Zebrafish).